The chain runs to 567 residues: Pyruvate decarboxylase (567 aa).

Pyruvate-binding residues include Asp-28 and His-117. Thiamine diphosphate is bound by residues Thr-393 and 416-418 (GSI). Residue Asp-447 coordinates Mg(2+). Thiamine diphosphate contacts are provided by residues 448-449 (GS) and 475-480 (NDGYTI). Residues Asn-475 and Gly-477 each coordinate Mg(2+). Residue Glu-481 participates in pyruvate binding.

This sequence belongs to the TPP enzyme family. In terms of assembly, homotetramer. Mg(2+) serves as cofactor. Thiamine diphosphate is required as a cofactor.

Its subcellular location is the cytoplasm. The catalysed reaction is a 2-oxocarboxylate + H(+) = an aldehyde + CO2. It catalyses the reaction pyruvate + H(+) = acetaldehyde + CO2. The sequence is that of Pyruvate decarboxylase (PDC11) from Candida albicans (strain SC5314 / ATCC MYA-2876) (Yeast).